A 121-amino-acid chain; its full sequence is Small ribosomal subunit protein uS13 (121 aa).

The disordered stretch occupies residues 94 to 121; that stretch reads GLPLRGQRTRTNARTRKGPRRAAQALKK.

Belongs to the universal ribosomal protein uS13 family. As to quaternary structure, part of the 30S ribosomal subunit. Forms a loose heterodimer with protein S19. Forms two bridges to the 50S subunit in the 70S ribosome.

In terms of biological role, located at the top of the head of the 30S subunit, it contacts several helices of the 16S rRNA. In the 70S ribosome it contacts the 23S rRNA (bridge B1a) and protein L5 of the 50S subunit (bridge B1b), connecting the 2 subunits; these bridges are implicated in subunit movement. Contacts the tRNAs in the A and P-sites. The protein is Small ribosomal subunit protein uS13 of Burkholderia mallei (strain NCTC 10247).